Reading from the N-terminus, the 160-residue chain is Large ribosomal subunit protein eL21 (160 aa).

This sequence belongs to the eukaryotic ribosomal protein eL21 family.

This is Large ribosomal subunit protein eL21 (RPL21) from Encephalitozoon cuniculi (strain GB-M1) (Microsporidian parasite).